Consider the following 323-residue polypeptide: tRNA U34 carboxymethyltransferase (323 aa).

Residues Lys-91, Trp-105, Lys-110, Gly-130, 152-154 (DPT), 181-182 (IE), Met-196, Tyr-200, and Arg-315 contribute to the carboxy-S-adenosyl-L-methionine site.

Belongs to the class I-like SAM-binding methyltransferase superfamily. CmoB family. Homotetramer.

It carries out the reaction carboxy-S-adenosyl-L-methionine + 5-hydroxyuridine(34) in tRNA = 5-carboxymethoxyuridine(34) in tRNA + S-adenosyl-L-homocysteine + H(+). Catalyzes carboxymethyl transfer from carboxy-S-adenosyl-L-methionine (Cx-SAM) to 5-hydroxyuridine (ho5U) to form 5-carboxymethoxyuridine (cmo5U) at position 34 in tRNAs. The protein is tRNA U34 carboxymethyltransferase of Cronobacter sakazakii (strain ATCC BAA-894) (Enterobacter sakazakii).